The chain runs to 111 residues: Probable 4-amino-4-deoxy-L-arabinose-phosphoundecaprenol flippase subunit ArnE (111 aa).

3 helical membrane passes run Leu-38–Leu-58, Leu-61–Ala-81, and Pro-91–Ala-111. One can recognise an EamA domain in the interval Leu-40–Ser-109.

Belongs to the ArnE family. As to quaternary structure, heterodimer of ArnE and ArnF.

It localises to the cell inner membrane. It participates in bacterial outer membrane biogenesis; lipopolysaccharide biosynthesis. Functionally, translocates 4-amino-4-deoxy-L-arabinose-phosphoundecaprenol (alpha-L-Ara4N-phosphoundecaprenol) from the cytoplasmic to the periplasmic side of the inner membrane. This Salmonella choleraesuis (strain SC-B67) protein is Probable 4-amino-4-deoxy-L-arabinose-phosphoundecaprenol flippase subunit ArnE.